An 81-amino-acid chain; its full sequence is Photosystem I iron-sulfur center (81 aa).

2 4Fe-4S ferredoxin-type domains span residues 2-31 and 39-68; these read SHSV…MIPW and IASA…VRVY. 8 residues coordinate [4Fe-4S] cluster: cysteine 11, cysteine 14, cysteine 17, cysteine 21, cysteine 48, cysteine 51, cysteine 54, and cysteine 58.

The eukaryotic PSI reaction center is composed of at least 11 subunits. [4Fe-4S] cluster is required as a cofactor.

The protein localises to the plastid. The protein resides in the chloroplast thylakoid membrane. The enzyme catalyses reduced [plastocyanin] + hnu + oxidized [2Fe-2S]-[ferredoxin] = oxidized [plastocyanin] + reduced [2Fe-2S]-[ferredoxin]. Its function is as follows. Apoprotein for the two 4Fe-4S centers FA and FB of photosystem I (PSI); essential for photochemical activity. FB is the terminal electron acceptor of PSI, donating electrons to ferredoxin. The C-terminus interacts with PsaA/B/D and helps assemble the protein into the PSI complex. Required for binding of PsaD and PsaE to PSI. PSI is a plastocyanin-ferredoxin oxidoreductase, converting photonic excitation into a charge separation, which transfers an electron from the donor P700 chlorophyll pair to the spectroscopically characterized acceptors A0, A1, FX, FA and FB in turn. This Acorus calamus (Sweet flag) protein is Photosystem I iron-sulfur center.